The sequence spans 218 residues: Peptide deformylase 1 (218 aa).

Cys126 and His168 together coordinate Fe cation. Glu169 is a catalytic residue. His172 is a binding site for Fe cation.

The protein belongs to the polypeptide deformylase family. Requires Fe(2+) as cofactor.

The catalysed reaction is N-terminal N-formyl-L-methionyl-[peptide] + H2O = N-terminal L-methionyl-[peptide] + formate. In terms of biological role, removes the formyl group from the N-terminal Met of newly synthesized proteins. Requires at least a dipeptide for an efficient rate of reaction. N-terminal L-methionine is a prerequisite for activity but the enzyme has broad specificity at other positions. This chain is Peptide deformylase 1, found in Streptomyces coelicolor (strain ATCC BAA-471 / A3(2) / M145).